Here is a 565-residue protein sequence, read N- to C-terminus: Oxygen-dependent choline dehydrogenase (565 aa).

FAD is bound at residue aspartate 6–glutamate 35. The Proton acceptor role is filled by histidine 475.

It belongs to the GMC oxidoreductase family. FAD serves as cofactor.

It catalyses the reaction choline + A = betaine aldehyde + AH2. The enzyme catalyses betaine aldehyde + NAD(+) + H2O = glycine betaine + NADH + 2 H(+). It participates in amine and polyamine biosynthesis; betaine biosynthesis via choline pathway; betaine aldehyde from choline (cytochrome c reductase route): step 1/1. Its function is as follows. Involved in the biosynthesis of the osmoprotectant glycine betaine. Catalyzes the oxidation of choline to betaine aldehyde and betaine aldehyde to glycine betaine at the same rate. The protein is Oxygen-dependent choline dehydrogenase of Pseudomonas putida (strain GB-1).